Here is a 214-residue protein sequence, read N- to C-terminus: Exosome complex component RRP46 homolog (214 aa).

This sequence belongs to the RNase PH family. As to quaternary structure, homodimer. Component of the RNA exosome complex. Interacts with crn-4; interaction promotes the DNase activity of crn-4. Interacts with crn-3, cps-6 and cyn-13.

It is found in the cytoplasm. The protein localises to the nucleus. Its function is as follows. Non-catalytic component of the RNA exosome complex which has 3'-&gt;5' exoribonuclease activity and participates in a multitude of cellular RNA processing and degradation events. Involved in apoptotic DNA degradation. In vitro, does not bind or digest single-stranded RNA. In vitro, binds to double-stranded DNA without detectable DNase activity. The chain is Exosome complex component RRP46 homolog from Caenorhabditis elegans.